The primary structure comprises 360 residues: D-alanine--D-alanine ligase (360 aa).

Residues 146–352 (KLCVADAGIA…YRNLITRLLE (207 aa)) form the ATP-grasp domain. 179-234 (EAQVSYPLFVKPASLGSSIGISKVHNREELHPALQAACALDWKVVVESTVKGREIE) provides a ligand contact to ATP. The Mg(2+) site is built by Asp305, Glu319, and Asn321.

This sequence belongs to the D-alanine--D-alanine ligase family. Requires Mg(2+) as cofactor. Mn(2+) is required as a cofactor.

The protein localises to the cytoplasm. The enzyme catalyses 2 D-alanine + ATP = D-alanyl-D-alanine + ADP + phosphate + H(+). The protein operates within cell wall biogenesis; peptidoglycan biosynthesis. Functionally, cell wall formation. This is D-alanine--D-alanine ligase from Chlorobium chlorochromatii (strain CaD3).